Reading from the N-terminus, the 252-residue chain is Triosephosphate isomerase (252 aa).

A substrate-binding site is contributed by 10–12; that stretch reads NWK. The active-site Electrophile is the histidine 96. Catalysis depends on glutamate 168, which acts as the Proton acceptor. Substrate is bound by residues glycine 174, serine 214, and 235-236; that span reads GG.

Belongs to the triosephosphate isomerase family. As to quaternary structure, homodimer.

It is found in the cytoplasm. The catalysed reaction is D-glyceraldehyde 3-phosphate = dihydroxyacetone phosphate. Its pathway is carbohydrate biosynthesis; gluconeogenesis. It functions in the pathway carbohydrate degradation; glycolysis; D-glyceraldehyde 3-phosphate from glycerone phosphate: step 1/1. Functionally, involved in the gluconeogenesis. Catalyzes stereospecifically the conversion of dihydroxyacetone phosphate (DHAP) to D-glyceraldehyde-3-phosphate (G3P). The sequence is that of Triosephosphate isomerase from Streptococcus pneumoniae serotype 2 (strain D39 / NCTC 7466).